The chain runs to 113 residues: Hydrogenase maturation factor HypA (113 aa).

Residue His2 participates in Ni(2+) binding. Zn(2+)-binding residues include Cys73, Cys76, Cys89, and Cys92.

The protein belongs to the HypA/HybF family.

Functionally, involved in the maturation of [NiFe] hydrogenases. Required for nickel insertion into the metal center of the hydrogenase. This Aeromonas hydrophila subsp. hydrophila (strain ATCC 7966 / DSM 30187 / BCRC 13018 / CCUG 14551 / JCM 1027 / KCTC 2358 / NCIMB 9240 / NCTC 8049) protein is Hydrogenase maturation factor HypA.